The primary structure comprises 405 residues: Scarecrow-like protein 23 (405 aa).

The disordered stretch occupies residues 1–20; the sequence is MTTKRIDRDLPSSDDPSSAK. The region spanning 31–400 is the GRAS domain; it reads ENDGAAAIKL…LSLLTASAWK (370 aa). Residues 38–102 are leucine repeat I (LRI); it reads IKLLSLLLQC…ISSYLSGACS (65 aa). The short motif at 45–49 is the LxCxE motif element; the sequence is LQCAE. The tract at residues 121–186 is VHIID; the sequence is LQTYNSVSPL…RKLRSIRITG (66 aa). A VHIID motif is present at residues 152–156; the sequence is VHIID. The tract at residues 196-228 is leucine repeat II (LRII); sequence STGRRLADFASSLNLPFEFHPIEGIIGNLIDPS. Positions 238–327 are PFYRE; it reads VVVHWMQHRL…QIVLGTEIRN (90 aa). The tract at residues 330 to 400 is SAW; it reads AHGGGRRKRM…LSLLTASAWK (71 aa).

The protein belongs to the GRAS family. Interacts with SHR. As to expression, expressed in seedlings, cotyledons, shoot apex, leaves and flowers.

The protein localises to the nucleus. In terms of biological role, probable transcription factor involved in plant development. The sequence is that of Scarecrow-like protein 23 (SCL23) from Arabidopsis thaliana (Mouse-ear cress).